Reading from the N-terminus, the 718-residue chain is Sodium/myo-inositol cotransporter (718 aa).

Residues 1–9 (MRAVLDTAD) are Extracellular-facing. The chain crosses the membrane as a helical span at residues 10–29 (IAIVALYFILVMCIGFFAMW). Residues 30–38 (KSNRSTVSG) lie on the Cytoplasmic side of the membrane. Residues 39–57 (YFLAGRSMTWVAIGASLFV) traverse the membrane as a helical segment. Residues 58-86 (SNIGSEHFIGLAGSGAASGFAVGAWEFNA) lie on the Extracellular side of the membrane. The helical transmembrane segment at 87–110 (LLLLQLLGWVFIPIYIRSGVYTMP) threads the bilayer. Over 111-123 (EYLSKRFGGHRIQ) the chain is Cytoplasmic. The chain crosses the membrane as a helical span at residues 124-144 (VYFAALSLILYIFTKLSVDLY). The Extracellular segment spans residues 145-157 (SGALFIQESLGWN). Residues 158 to 183 (LYVSVILLIGMTALLTVTGGLVAVIY) form a helical membrane-spanning segment. The Cytoplasmic segment spans residues 184–186 (TDT). The chain crosses the membrane as a helical span at residues 187-205 (LQALLMIIGALTLMIISIM). At 206-303 (EIGGFEEVKR…HAKGSTLMAG (98 aa)) the chain is on the extracellular side. Asparagine 232 is a glycosylation site (N-linked (GlcNAc...) asparagine). A helical membrane pass occupies residues 304–324 (FLKLLPMFIIVVPGMISRILF). Topologically, residues 325-353 (TDDIACINPEHCMLVCGSRAGCSNIAYPR) are cytoplasmic. Residues 354–376 (LVMKLVPVGLRGLMMAVMIAALM) traverse the membrane as a helical segment. Topologically, residues 377-406 (SDLDSIFNSASTIFTLDVYKLIRKSASSRE) are extracellular. Residues 407–430 (LMIVGRIFVAFMVVISIAWVPIIV) form a helical membrane-spanning segment. The Cytoplasmic portion of the chain corresponds to 431–443 (EMQGGQMYLYIQE). The helical transmembrane segment at 444-462 (VADYLTPPVAALFLLAIFW) threads the bilayer. Topologically, residues 463-510 (KRCNEQGAFYGGMAGFVLGAVRLILAFAYRAPECDQPDNRPGFIKDIH) are extracellular. The helical transmembrane segment at 511–532 (YMYVATGLFWVTGLITVIVSLL) threads the bilayer. At 533–695 (TPPPTKEQIR…QMLEETRQVK (163 aa)) the chain is on the cytoplasmic side. 2 positions are modified to phosphoserine: serine 594 and serine 632. Residues 696 to 716 (VILNIGLFAVCSLGIFMFVYF) form a helical membrane-spanning segment. At 717-718 (SL) the chain is on the extracellular side.

Belongs to the sodium:solute symporter (SSF) (TC 2.A.21) family. Interacts with KCNQ2 (via the pore module). Interacts with KCNQ1; this interaction is direct. Forms coregulatory complexes with ion channels KCNQ2-KCNQ3 and KCNQ1-KCNE2.

Its subcellular location is the apical cell membrane. The protein localises to the basolateral cell membrane. The catalysed reaction is myo-inositol(out) + 2 Na(+)(out) = myo-inositol(in) + 2 Na(+)(in). The enzyme catalyses scyllo-inositol(out) + 2 Na(+)(out) = scyllo-inositol(in) + 2 Na(+)(in). Electrogenic Na(+)-coupled sugar symporter that actively transports myo-inositol and its stereoisomer scyllo-inositol across the plasma membrane, with a Na(+) to sugar coupling ratio of 2:1. Maintains myo-inositol concentration gradient that defines cell volume and fluid balance during osmotic stress, in particular in the fetoplacental unit and central nervous system. Forms coregulatory complexes with voltage-gated K(+) ion channels, allosterically altering ion selectivity, voltage dependence and gating kinetics of the channel. In turn, K(+) efflux through the channel forms a local electrical gradient that modulates electrogenic Na(+)-coupled myo-inositol influx through the transporter. Associates with KCNQ1-KCNE2 channel in the apical membrane of choroid plexus epithelium and regulates the myo-inositol gradient between blood and cerebrospinal fluid with an impact on neuron excitability. Associates with KCNQ2-KCNQ3 channel altering ion selectivity, increasing Na(+) and Cs(+) permeation relative to K(+) permeation. Provides myo-inositol precursor for biosynthesis of phosphoinositides such as PI(4,5)P2, thus indirectly affecting the activity of phosphoinositide-dependent ion channels and Ca(2+) signaling upon osmotic stress. This Homo sapiens (Human) protein is Sodium/myo-inositol cotransporter.